A 57-amino-acid chain; its full sequence is Large ribosomal subunit protein bL32 (57 aa).

A disordered region spans residues 1–20; it reads MAVQQRRVSKSRKGMRRSHD. A compositionally biased stretch (basic residues) spans 7 to 19; sequence RVSKSRKGMRRSH.

It belongs to the bacterial ribosomal protein bL32 family.

In Ureaplasma urealyticum serovar 10 (strain ATCC 33699 / Western), this protein is Large ribosomal subunit protein bL32.